A 482-amino-acid chain; its full sequence is Early growth response protein 4 (482 aa).

Residues 274-357 (DLGEGAESLP…PPAKARRKGR (84 aa)) form a disordered region. Over residues 280-290 (ESLPGLLTPPS) the composition is skewed to low complexity. Residues 291–302 (GEGGSSGEGGEF) are compositionally biased toward gly residues. The segment covering 337 to 349 (PEPPVPPPAPFPP) has biased composition (pro residues). 3 consecutive C2H2-type zinc fingers follow at residues 376–400 (FACPVESCVRSFARSDELNRHLRIH), 406–428 (FQCRICLRNFSRSDHLTTHVRTH), and 434–456 (FACDVCGRRFARSDEKKRHSKVH).

This sequence belongs to the EGR C2H2-type zinc-finger protein family. As to expression, expressed in brain. In the cerebellum and frontal cortex.

It localises to the nucleus. In terms of biological role, transcriptional regulator. Recognizes and binds to the DNA sequence 5'-GCGGGGGCG-3' (GSG). Activates the transcription of target genes whose products are required for mitogenesis and differentiation. This chain is Early growth response protein 4 (EGR4), found in Bos taurus (Bovine).